The primary structure comprises 512 residues: MADPLIPSPTNKAFFIIDLSGQKSNPIIPTEFIWNHFNGKIQSTNMKLTSDASDRNWDVKLDGARFAGGWKDFSVSHSVRDDDLLSFRHDGGMVFHVSPFGRSFSQIQLISSSTSDDDDDERTVFDDDEDDDVGDDDDNSISEDDFCSKKISSKKRARKETESSSDKSYLVAHVTPSSLLRDNMCVLSKFARSNGLDRRECEIDLRDEHEKSWTLLLRHNKKTGQAFMRGGWRSFCRNNGIKAGSICRFKLVQSGIKPVLQLCPNASSIPEGNSSKARKKRNVSEIEGDEIESENCSETIPLNQNKILTFDLKPYVFRSCQFFLPASFARENGIVEAGEVTVLNKDGIEWKSHLVNIKGRDQFYNRGCQDFFVANGVKNVGDPFTLEVIRGGPSPILKICSKVKQAASSDGHKTADRKPRMTDQAPLAEEQTDNRVEKRAQVTEEGGPSRSTRADPGNLQQKQPCSISDHVKKVKQSIVDTLTDVRRFQSELKVKEQNLEASLQEIDALGMI.

Positions 11–103 (NKAFFIIDLS…VFHVSPFGRS (93 aa)) form a DNA-binding region, TF-B3 1. The tract at residues 111–145 (SSSTSDDDDDERTVFDDDEDDDVGDDDDNSISEDD) is disordered. Over residues 115–145 (SDDDDDERTVFDDDEDDDVGDDDDNSISEDD) the composition is skewed to acidic residues. 2 DNA-binding regions (TF-B3) span residues 169–265 (YLVA…LCPN) and 307–403 (ILTF…CSKV). Positions 408–465 (SSDGHKTADRKPRMTDQAPLAEEQTDNRVEKRAQVTEEGGPSRSTRADPGNLQQKQPC) are disordered. Composition is skewed to basic and acidic residues over residues 410 to 421 (DGHKTADRKPRM) and 432 to 442 (TDNRVEKRAQV).

The protein resides in the nucleus. The chain is Putative B3 domain-containing protein REM4 (REM4) from Arabidopsis thaliana (Mouse-ear cress).